Consider the following 88-residue polypeptide: UPF0297 protein Bcer98_3100 (88 aa).

It belongs to the UPF0297 family.

This Bacillus cytotoxicus (strain DSM 22905 / CIP 110041 / 391-98 / NVH 391-98) protein is UPF0297 protein Bcer98_3100.